The sequence spans 509 residues: Glycerol kinase (509 aa).

Thr12 is a binding site for ADP. ATP is bound by residues Thr12, Thr13, and Ser14. Thr12 contributes to the sn-glycerol 3-phosphate binding site. Arg16 contacts ADP. Residues Arg82, Glu83, Tyr134, and Asp245 each coordinate sn-glycerol 3-phosphate. Arg82, Glu83, Tyr134, Asp245, and Gln246 together coordinate glycerol. The ADP site is built by Thr267 and Gly311. ATP-binding residues include Thr267, Gly311, Gln315, and Gly412. Gly412 and Asn416 together coordinate ADP.

Belongs to the FGGY kinase family.

It carries out the reaction glycerol + ATP = sn-glycerol 3-phosphate + ADP + H(+). It participates in polyol metabolism; glycerol degradation via glycerol kinase pathway; sn-glycerol 3-phosphate from glycerol: step 1/1. Its activity is regulated as follows. Inhibited by fructose 1,6-bisphosphate (FBP). In terms of biological role, key enzyme in the regulation of glycerol uptake and metabolism. Catalyzes the phosphorylation of glycerol to yield sn-glycerol 3-phosphate. The polypeptide is Glycerol kinase (Rhizorhabdus wittichii (strain DSM 6014 / CCUG 31198 / JCM 15750 / NBRC 105917 / EY 4224 / RW1) (Sphingomonas wittichii)).